The chain runs to 550 residues: Kinase suppressor of Ras B (550 aa).

Composition is skewed to low complexity over residues 21–56 (SFSS…SNPI) and 63–75 (ATSS…STSS). Positions 21–87 (SFSSWRRSST…PPPASAPPRI (67 aa)) are disordered. Residues 90-145 (YHKMVPSKSKFRQCDVCEHIFIFDFVRKQHLDDVYACNVCGIRVHKGCLDRVKNDC) form a Phorbol-ester/DAG-type zinc finger. Residues 172–196 (TTASISKSLTTSPTCSTSTTMSPAG) are disordered. A compositionally biased stretch (low complexity) spans 177 to 193 (SKSLTTSPTCSTSTTMS). A Protein kinase domain is found at 248 to 528 (VDVMTKIGDG…FQQIVKRITV (281 aa)). The interval 530 to 550 (MPRKESNKQKRRSTAHENPLF) is disordered.

It belongs to the protein kinase superfamily. TKL Ser/Thr protein kinase family. Interacts with ndk-1.

Probable inactive protein kinase which positively regulates Ras-mediated signaling probably acting at the level of let-60/ras or/and lin-45/raf. In the germline, regulates meiotic progression during oogenesis and mpk-1 (isoform b) phosphorylation. Plays a role in meiotic recombination events. Functions redundantly with ksr-1 in the Ras-mediated regulation of larval survival, the development of excretory canal, in determining vulval precursor cell fate during vulval induction and in mpk-1 phosphorylation in somatic cells. The chain is Kinase suppressor of Ras B from Caenorhabditis elegans.